The chain runs to 180 residues: uncharacterized protein (180 aa).

This sequence belongs to the CdaR family.

This is an uncharacterized protein from Thermomonospora curvata.